The primary structure comprises 156 residues: Small ribosomal subunit protein bS18c (156 aa).

A disordered region spans residues 1-54 (MYTSKQPFLKSKQPFRKSKQPFRKSKQPFRKFKKPFRKSKQPFRRRPRIGPGDR). A compositionally biased stretch (basic residues) spans 13-48 (QPFRKSKQPFRKSKQPFRKFKKPFRKSKQPFRRRPR).

The protein belongs to the bacterial ribosomal protein bS18 family. As to quaternary structure, part of the 30S ribosomal subunit.

The protein resides in the plastid. Its subcellular location is the chloroplast. The protein is Small ribosomal subunit protein bS18c of Lolium perenne (Perennial ryegrass).